Reading from the N-terminus, the 326-residue chain is DNA-directed RNA polymerase subunit alpha (326 aa).

Residues 1–231 form an alpha N-terminal domain (alpha-NTD) region; that stretch reads MQTALLKPKI…DQLSVFAALE (231 aa). The alpha C-terminal domain (alpha-CTD) stretch occupies residues 247 to 326; it reads IDPILLRPVD…ENWPPAGLEK (80 aa).

This sequence belongs to the RNA polymerase alpha chain family. Homodimer. The RNAP catalytic core consists of 2 alpha, 1 beta, 1 beta' and 1 omega subunit. When a sigma factor is associated with the core the holoenzyme is formed, which can initiate transcription.

It catalyses the reaction RNA(n) + a ribonucleoside 5'-triphosphate = RNA(n+1) + diphosphate. Its function is as follows. DNA-dependent RNA polymerase catalyzes the transcription of DNA into RNA using the four ribonucleoside triphosphates as substrates. The sequence is that of DNA-directed RNA polymerase subunit alpha from Cupriavidus necator (strain ATCC 17699 / DSM 428 / KCTC 22496 / NCIMB 10442 / H16 / Stanier 337) (Ralstonia eutropha).